A 120-amino-acid chain; its full sequence is Large ribosomal subunit protein bL19 (120 aa).

It belongs to the bacterial ribosomal protein bL19 family.

In terms of biological role, this protein is located at the 30S-50S ribosomal subunit interface and may play a role in the structure and function of the aminoacyl-tRNA binding site. The polypeptide is Large ribosomal subunit protein bL19 (rplS) (Nostoc sp. (strain PCC 7120 / SAG 25.82 / UTEX 2576)).